Consider the following 689-residue polypeptide: Transketolase (689 aa).

H56 contributes to the substrate binding site. Thiamine diphosphate contacts are provided by residues H96 and 144 to 146; that span reads GNL. D185 serves as a coordination point for Mg(2+). Residues G186 and N215 each coordinate thiamine diphosphate. Positions 215 and 217 each coordinate Mg(2+). Substrate is bound by residues H289, R380, and S407. H289 lines the thiamine diphosphate pocket. E434 (proton donor) is an active-site residue. A thiamine diphosphate-binding site is contributed by F460. Residues H484, D492, and R543 each coordinate substrate.

The protein belongs to the transketolase family. In terms of assembly, homodimer. The cofactor is Mg(2+). It depends on Ca(2+) as a cofactor. Mn(2+) is required as a cofactor. Requires Co(2+) as cofactor. Thiamine diphosphate serves as cofactor.

The enzyme catalyses D-sedoheptulose 7-phosphate + D-glyceraldehyde 3-phosphate = aldehydo-D-ribose 5-phosphate + D-xylulose 5-phosphate. Catalyzes the transfer of a two-carbon ketol group from a ketose donor to an aldose acceptor, via a covalent intermediate with the cofactor thiamine pyrophosphate. The chain is Transketolase (tkt) from Aquifex aeolicus (strain VF5).